Reading from the N-terminus, the 256-residue chain is Thiazole synthase (256 aa).

Lysine 96 serves as the catalytic Schiff-base intermediate with DXP. 1-deoxy-D-xylulose 5-phosphate-binding positions include glycine 157, 183-184 (AG), and 205-206 (NT).

Belongs to the ThiG family. In terms of assembly, homotetramer. Forms heterodimers with either ThiH or ThiS.

The protein localises to the cytoplasm. The enzyme catalyses [ThiS sulfur-carrier protein]-C-terminal-Gly-aminoethanethioate + 2-iminoacetate + 1-deoxy-D-xylulose 5-phosphate = [ThiS sulfur-carrier protein]-C-terminal Gly-Gly + 2-[(2R,5Z)-2-carboxy-4-methylthiazol-5(2H)-ylidene]ethyl phosphate + 2 H2O + H(+). Its pathway is cofactor biosynthesis; thiamine diphosphate biosynthesis. Functionally, catalyzes the rearrangement of 1-deoxy-D-xylulose 5-phosphate (DXP) to produce the thiazole phosphate moiety of thiamine. Sulfur is provided by the thiocarboxylate moiety of the carrier protein ThiS. In vitro, sulfur can be provided by H(2)S. The polypeptide is Thiazole synthase (Bacillus cereus (strain AH187)).